The following is a 349-amino-acid chain: Transcription initiation factor TFIID subunit 7 (349 aa).

The [KR]-[STA]-K motif motif lies at 3–5 (KSK). The interval 105–126 (PPVEEPVASTDPKASKKKDKDK) is disordered. Phosphoserine is present on residues serine 171, serine 200, serine 201, and serine 213. Positions 186-212 (EDETKEAENQGLDISSPGMSGHRQGHD) are disordered. The disordered stretch occupies residues 227–247 (SSSSEDEDETQHQDEEDINII). Positions 230 to 247 (SEDEDETQHQDEEDINII) are enriched in acidic residues. The stretch at 244-349 (INIIDTEEDL…QEELESLLEK (106 aa)) forms a coiled coil. Serine 264 bears the Phosphoserine mark. The interval 328-349 (KEDREKEQLSSLQEELESLLEK) is disordered.

Belongs to the TAF7 family. Component of the TFIID basal transcription factor complex, composed of TATA-box-binding protein TBP, and a number of TBP-associated factors (TAFs), including TAF1, TAF2, TAF3, TAF4, TAF5, TAF6, TAF7, TAF8, TAF9, TAF10, TAF11, TAF12 and TAF13. Part of a TFIID-containing RNA polymerase II pre-initiation complex that is composed of TBP and at least GTF2A1, GTF2A2, GTF2E1, GTF2E2, GTF2F1, GTF2H2, GTF2H3, GTF2H4, GTF2H5, GTF2B, TCEA1, ERCC2, ERCC3, TAF1, TAF2, TAF3, TAF4, TAF5, TAF6, TAF7, TAF8, TAF9, TAF10, TAF11, TAF12 and TAF13. Interacts with TAF1; the interaction is direct. Interacts with TAF1, TAF5, TAF11, TAF12, and TAF13, but not with TAF10 or TBP. Component of some MLL1/MLL complex, at least composed of the core components KMT2A/MLL1, ASH2L, HCFC1/HCF1, WDR5 and RBBP5, as well as the facultative components BACC1, CHD8, E2F6, HSP70, INO80C, KANSL1, LAS1L, MAX, MCRS1, MGA, MYST1/MOF, PELP1, PHF20, PRP31, RING2, RUVB1/TIP49A, RUVB2/TIP49B, SENP3, TAF1, TAF4, TAF6, TAF7, TAF9 and TEX10. Interacts with CIITA and TAF1 and inhibits their acetyltransferase activity, and behaving as a repressor of CIITA- and TAF1-regulated promoters. Post-translationally, phosphorylated by CIITA. Phosphorylation at Ser-264 by TAF1 in early G1 phase disrupts binding to TAF1. Ubiquitinated by TRIM26; leading to proteasomal degradation. Ubiquitous.

The protein resides in the nucleus. Its function is as follows. The TFIID basal transcription factor complex plays a major role in the initiation of RNA polymerase II (Pol II)-dependent transcription. TFIID recognizes and binds promoters with or without a TATA box via its subunit TBP, a TATA-box-binding protein, and promotes assembly of the pre-initiation complex (PIC). The TFIID complex consists of TBP and TBP-associated factors (TAFs), including TAF1, TAF2, TAF3, TAF4, TAF5, TAF6, TAF7, TAF8, TAF9, TAF10, TAF11, TAF12 and TAF13. TAF7 forms a promoter DNA binding subcomplex of TFIID, together with TAF1 and TAF2. Part of a TFIID complex containing TAF10 (TFIID alpha) and a TFIID complex lacking TAF10 (TFIID beta). In Homo sapiens (Human), this protein is Transcription initiation factor TFIID subunit 7 (TAF7).